Here is a 273-residue protein sequence, read N- to C-terminus: 3-methyl-2-oxobutanoate hydroxymethyltransferase (273 aa).

2 residues coordinate Mg(2+): Asp49 and Asp88. Residues 49–50 (DS), Asp88, and Lys118 contribute to the 3-methyl-2-oxobutanoate site. Mg(2+) is bound at residue Glu120. The active-site Proton acceptor is Glu187.

It belongs to the PanB family. Homodecamer; pentamer of dimers. Requires Mg(2+) as cofactor.

Its subcellular location is the cytoplasm. It catalyses the reaction 3-methyl-2-oxobutanoate + (6R)-5,10-methylene-5,6,7,8-tetrahydrofolate + H2O = 2-dehydropantoate + (6S)-5,6,7,8-tetrahydrofolate. The protein operates within cofactor biosynthesis; (R)-pantothenate biosynthesis; (R)-pantoate from 3-methyl-2-oxobutanoate: step 1/2. Its function is as follows. Catalyzes the reversible reaction in which hydroxymethyl group from 5,10-methylenetetrahydrofolate is transferred onto alpha-ketoisovalerate to form ketopantoate. In Sinorhizobium medicae (strain WSM419) (Ensifer medicae), this protein is 3-methyl-2-oxobutanoate hydroxymethyltransferase.